The chain runs to 436 residues: Trigger factor (436 aa).

Residues 161–246 form the PPIase FKBP-type domain; the sequence is GDQLNIDFVG…VNSVSEAELP (86 aa).

The protein belongs to the FKBP-type PPIase family. Tig subfamily.

Its subcellular location is the cytoplasm. The enzyme catalyses [protein]-peptidylproline (omega=180) = [protein]-peptidylproline (omega=0). Its function is as follows. Involved in protein export. Acts as a chaperone by maintaining the newly synthesized protein in an open conformation. Functions as a peptidyl-prolyl cis-trans isomerase. The polypeptide is Trigger factor (Azotobacter vinelandii (strain DJ / ATCC BAA-1303)).